Here is a 496-residue protein sequence, read N- to C-terminus: NADP-dependent glyceraldehyde-3-phosphate dehydrogenase (496 aa).

Residues Arg116 and 169 to 170 (NY) contribute to the substrate site. Positions 192, 195, and 230 each coordinate NADP(+). Residue 245–249 (GGDTG) participates in NAD(+) binding. Glu264 acts as the Proton acceptor in catalysis. 297-299 (RCT) contacts substrate. The active-site Nucleophile is the Cys298. Position 391 (Glu391) interacts with NADP(+). Arg451 contributes to the substrate binding site.

Belongs to the aldehyde dehydrogenase family.

The protein localises to the cytoplasm. The catalysed reaction is D-glyceraldehyde 3-phosphate + NADP(+) + H2O = (2R)-3-phosphoglycerate + NADPH + 2 H(+). In terms of biological role, important as a means of generating NADPH for biosynthetic reactions. The protein is NADP-dependent glyceraldehyde-3-phosphate dehydrogenase (GAPN) of Pisum sativum (Garden pea).